An 840-amino-acid chain; its full sequence is Phosphatidylglycerol lysyltransferase (840 aa).

Topologically, residues M1–K8 are cytoplasmic. A helical transmembrane segment spans residues I9–L29. At Y30–S52 the chain is on the extracellular side. A helical transmembrane segment spans residues L53 to I73. The Cytoplasmic segment spans residues L74–R89. A helical membrane pass occupies residues V90 to G110. At V111–H128 the chain is on the extracellular side. The helical transmembrane segment at F129–V149 threads the bilayer. The Cytoplasmic segment spans residues F150–K161. The chain crosses the membrane as a helical span at residues I162 to Y182. The Extracellular segment spans residues S183 to T200. A helical transmembrane segment spans residues L201–V221. The Cytoplasmic segment spans residues D222–S229. A helical membrane pass occupies residues F230–F250. The Extracellular segment spans residues G251–V271. A helical membrane pass occupies residues L272–I292. At L293–S337 the chain is on the cytoplasmic side. A helical membrane pass occupies residues L338–Y358. Residues D359–Y369 lie on the Extracellular side of the membrane. The chain crosses the membrane as a helical span at residues Y370–I390. Over Y391–S394 the chain is Cytoplasmic. 2 helical membrane passes run R395–T415 and Y416–F436. Topologically, residues R437–N450 are cytoplasmic. The chain crosses the membrane as a helical span at residues I451 to G471. Residues T472 to R489 lie on the Extracellular side of the membrane. A helical transmembrane segment spans residues Y490–F510. The Cytoplasmic segment spans residues D511 to K840.

This sequence belongs to the LPG synthase family.

It localises to the cell membrane. The enzyme catalyses L-lysyl-tRNA(Lys) + a 1,2-diacyl-sn-glycero-3-phospho-(1'-sn-glycerol) = a 1,2-diacyl-sn-glycero-3-phospho-1'-(3'-O-L-lysyl)-sn-glycerol + tRNA(Lys). Its function is as follows. Catalyzes the transfer of a lysyl group from L-lysyl-tRNA(Lys) to membrane-bound phosphatidylglycerol (PG), which produces lysylphosphatidylglycerol (LPG), a major component of the bacterial membrane with a positive net charge. LPG synthesis contributes to bacterial virulence as it is involved in the resistance mechanism against cationic antimicrobial peptides (CAMP) produces by the host's immune system (defensins, cathelicidins) and by the competing microorganisms (bacteriocins). In fact, the modification of anionic phosphatidylglycerol with positively charged L-lysine results in repulsion of the peptides. The polypeptide is Phosphatidylglycerol lysyltransferase (mprF) (Staphylococcus aureus (strain MSSA476)).